The primary structure comprises 220 residues: N-(5'-phosphoribosyl)anthranilate isomerase (220 aa).

It belongs to the TrpF family.

The catalysed reaction is N-(5-phospho-beta-D-ribosyl)anthranilate = 1-(2-carboxyphenylamino)-1-deoxy-D-ribulose 5-phosphate. The protein operates within amino-acid biosynthesis; L-tryptophan biosynthesis; L-tryptophan from chorismate: step 3/5. The sequence is that of N-(5'-phosphoribosyl)anthranilate isomerase from Agrobacterium fabrum (strain C58 / ATCC 33970) (Agrobacterium tumefaciens (strain C58)).